The primary structure comprises 714 residues: SEC14 domain and spectrin repeat-containing protein 1 (714 aa).

The CRAL-TRIO domain maps to 1–153; the sequence is MEASCILPVL…EFGGSLLYDH (153 aa). Spectrin repeat units follow at residues 275–381, 384–497, and 503–605; these read SQLE…NVLQ, YEFH…LKML, and FKCE…HRLE. The segment at 691–714 is disordered; it reads EAEQRLEEEEEEEEAALEVEPRES. Residues 696 to 707 are compositionally biased toward acidic residues; that stretch reads LEEEEEEEEAAL.

It belongs to the SOLO family.

In terms of biological role, may act as the primary docking protein directing membrane turnover and assembly of the transient receptor potential channels trpc4 and trpc5. Binds phospholipids. This chain is SEC14 domain and spectrin repeat-containing protein 1 (sestd1), found in Danio rerio (Zebrafish).